The following is a 282-amino-acid chain: Putative polysaccharide deacetylase YheN (282 aa).

The chain crosses the membrane as a helical span at residues 15–35 (LAFKFASLAVLCVLLLLMVIL). In terms of domain architecture, NodB homology spans 85–271 (KTVYLTFDDG…KLKEKGYSFG (187 aa)).

Belongs to the polysaccharide deacetylase family.

It localises to the cell membrane. The sequence is that of Putative polysaccharide deacetylase YheN (yheN) from Bacillus subtilis (strain 168).